Here is a 464-residue protein sequence, read N- to C-terminus: tRNA(Ile)-lysidine synthase (464 aa).

26–31 (SGGPDS) contributes to the ATP binding site.

The protein belongs to the tRNA(Ile)-lysidine synthase family.

It is found in the cytoplasm. It carries out the reaction cytidine(34) in tRNA(Ile2) + L-lysine + ATP = lysidine(34) in tRNA(Ile2) + AMP + diphosphate + H(+). In terms of biological role, ligates lysine onto the cytidine present at position 34 of the AUA codon-specific tRNA(Ile) that contains the anticodon CAU, in an ATP-dependent manner. Cytidine is converted to lysidine, thus changing the amino acid specificity of the tRNA from methionine to isoleucine. This is tRNA(Ile)-lysidine synthase from Geobacillus kaustophilus (strain HTA426).